The primary structure comprises 175 residues: Alpha-crystallin B chain (175 aa).

Methionine 1 carries the N-acetylmethionine modification. At serine 19 the chain carries Phosphoserine. O-linked (GlcNAc) serine glycosylation occurs at serine 41. A phosphoserine mark is found at serine 45 and serine 59. Residues 56 to 164 (RAPSWIDTGL…PERTIPITRE (109 aa)) enclose the sHSP domain. Residue histidine 83 participates in Zn(2+) binding. Lysine 90 is a glycosylation site (N-linked (Glc) (glycation) lysine). The residue at position 92 (lysine 92) is an N6-acetyllysine; alternate. N-linked (Glc) (glycation) lysine; alternate glycosylation occurs at lysine 92. 4 residues coordinate Zn(2+): histidine 104, glutamate 106, histidine 111, and histidine 119. Residues 144-175 (TVNGPRKQASGPERTIPITREEKPAVTAAPKK) form a disordered region. Lysine 166 bears the N6-acetyllysine mark. Residue threonine 170 is glycosylated (O-linked (GlcNAc) threonine).

Belongs to the small heat shock protein (HSP20) family. In terms of assembly, heteromer composed of three CRYAA and one CRYAB subunits. Aggregates with homologous proteins, including the small heat shock protein HSPB1, to form large heteromeric complexes. Inter-subunit bridging via zinc ions enhances stability, which is crucial as there is no protein turn over in the lens. Interacts with HSPBAP1 and TTN/titin. Interacts with TMEM109; in the cellular response to DNA damage. Interacts with DES; binds rapidly during early stages of DES filament assembly and a reduced binding seen in the later stages. Interacts with TMED10; the interaction mediates the translocation from the cytoplasm into the ERGIC (endoplasmic reticulum-Golgi intermediate compartment) and thereby secretion. Interacts with ATP6V1A and with MTOR, forming a ternary complex. It is not known whether either Lys-90, or Lys-92, or both are glycated. In terms of tissue distribution, lens as well as other tissues.

The protein localises to the cytoplasm. It is found in the nucleus. The protein resides in the secreted. It localises to the lysosome. In terms of biological role, may contribute to the transparency and refractive index of the lens. Has chaperone-like activity, preventing aggregation of various proteins under a wide range of stress conditions. In lens epithelial cells, stabilizes the ATP6V1A protein, preventing its degradation by the proteasome. This chain is Alpha-crystallin B chain (CRYAB), found in Bos taurus (Bovine).